The primary structure comprises 554 residues: ATP synthase subunit alpha (554 aa).

Residue 172–179 coordinates ATP; it reads GDRKTGKT. Residues 528–554 form a disordered region; that stretch reads LDEEELEKESVKVKKPAPEKKAKKEQK. Over residues 535–554 the composition is skewed to basic and acidic residues; sequence KESVKVKKPAPEKKAKKEQK.

This sequence belongs to the ATPase alpha/beta chains family. F-type ATPases have 2 components, CF(1) - the catalytic core - and CF(0) - the membrane proton channel. CF(1) has five subunits: alpha(3), beta(3), gamma(1), delta(1), epsilon(1). CF(0) has three main subunits: a(1), b(2) and c(9-12). The alpha and beta chains form an alternating ring which encloses part of the gamma chain. CF(1) is attached to CF(0) by a central stalk formed by the gamma and epsilon chains, while a peripheral stalk is formed by the delta and b chains.

The protein resides in the cell membrane. The catalysed reaction is ATP + H2O + 4 H(+)(in) = ADP + phosphate + 5 H(+)(out). In terms of biological role, produces ATP from ADP in the presence of a proton gradient across the membrane. The alpha chain is a regulatory subunit. The chain is ATP synthase subunit alpha from Mycolicibacterium paratuberculosis (strain ATCC BAA-968 / K-10) (Mycobacterium paratuberculosis).